Reading from the N-terminus, the 128-residue chain is Cytochrome c-type biogenesis protein CcmE (128 aa).

Over 1 to 8 (MQKRVRNR) the chain is Cytoplasmic. Residues 9–29 (LITIIICFCSACLGISIILYN) traverse the membrane as a helical; Signal-anchor for type II membrane protein segment. At 30–128 (LEKNIVFFLP…KHDENYRPPQ (99 aa)) the chain is on the periplasmic side. His120 and Tyr124 together coordinate heme.

This sequence belongs to the CcmE/CycJ family.

The protein localises to the cell inner membrane. Functionally, heme chaperone required for the biogenesis of c-type cytochromes. Transiently binds heme delivered by CcmC and transfers the heme to apo-cytochromes in a process facilitated by CcmF and CcmH. This is Cytochrome c-type biogenesis protein CcmE from Rickettsia peacockii (strain Rustic).